A 232-amino-acid polypeptide reads, in one-letter code: Enterobactin synthase component D (232 aa).

Positions 106, 108, and 150 each coordinate Mg(2+).

It belongs to the P-Pant transferase superfamily. EntD family. EntB, EntD, EntE, and EntF form a multienzyme complex called enterobactin synthase. It depends on Mg(2+) as a cofactor.

It is found in the membrane. The enzyme catalyses apo-[aryl-carrier protein] + CoA = holo-[aryl-carrier protein] + adenosine 3',5'-bisphosphate + H(+). It carries out the reaction apo-[peptidyl-carrier protein] + CoA = holo-[peptidyl-carrier protein] + adenosine 3',5'-bisphosphate + H(+). The protein operates within siderophore biosynthesis; enterobactin biosynthesis. Its function is as follows. Involved in the biosynthesis of the siderophore enterobactin (enterochelin), which is a macrocyclic trimeric lactone of N-(2,3-dihydroxybenzoyl)-serine. The serine trilactone serves as a scaffolding for the three catechol functionalities that provide hexadentate coordination for the tightly ligated iron(2+) atoms. Plays an essential role in the assembly of the enterobactin by catalyzing the transfer of the 4'-phosphopantetheine (Ppant) moiety from coenzyme A to the apo-domains of both EntB (ArCP domain) and EntF (PCP domain) to yield their holo-forms which make them competent for the activation of 2,3-dihydroxybenzoate (DHB) and L-serine, respectively. This is Enterobactin synthase component D from Salmonella austin.